The sequence spans 123 residues: Small ribosomal subunit protein uS13 (123 aa).

The segment at Pro-97–Lys-123 is disordered.

Belongs to the universal ribosomal protein uS13 family. Part of the 30S ribosomal subunit. Forms a loose heterodimer with protein S19. Forms two bridges to the 50S subunit in the 70S ribosome.

Its function is as follows. Located at the top of the head of the 30S subunit, it contacts several helices of the 16S rRNA. In the 70S ribosome it contacts the 23S rRNA (bridge B1a) and protein L5 of the 50S subunit (bridge B1b), connecting the 2 subunits; these bridges are implicated in subunit movement. Contacts the tRNAs in the A and P-sites. This Ehrlichia chaffeensis (strain ATCC CRL-10679 / Arkansas) protein is Small ribosomal subunit protein uS13.